Consider the following 324-residue polypeptide: MAVGRNNTIVTKFILLGLSDHPQMKIFLFMLFLGLYLLTLAWNLSLIALIKMDSHLHMPMYFFLSNLSFLDICYVSSTAPKMLSDIITEQKTISFVGCATQYFVFCGMGLTECFLLAAMAYDRYAAICNPLLYTVLISHTLCLKMVVGAYVGGFLSSFIETYSVYQHDFCGPYMINHFFCDLPPVLALSCSDTFTSEVVTFIVSVVVGIVSVLVVLISYGYIVAAVVKISSATGRTKAFSTCASHLTAVTLFYGSGFFMYMRPSSSYSLNRDKVVSIFYALVIPVVNPIIYSFRNKEIKNAMRKAMERDPGISHGGPFIFMTLG.

The Extracellular portion of the chain corresponds to Met1–Ile26. A glycan (N-linked (GlcNAc...) asparagine) is linked at Asn6. A helical transmembrane segment spans residues Phe27–Ile47. Over Ala48 to His55 the chain is Cytoplasmic. Residues Leu56–Ser76 form a helical membrane-spanning segment. At Ser77–Thr100 the chain is on the extracellular side. Cysteines 98 and 190 form a disulfide. A helical transmembrane segment spans residues Gln101–Tyr121. Residues Asp122 to Thr134 lie on the Cytoplasmic side of the membrane. The helical transmembrane segment at Val135–Leu155 threads the bilayer. Residues Ser156 to Glu197 lie on the Extracellular side of the membrane. The chain crosses the membrane as a helical span at residues Val198–Ser218. Topologically, residues Tyr219–Ala238 are cytoplasmic. The chain crosses the membrane as a helical span at residues Phe239–Met259. The Extracellular portion of the chain corresponds to Tyr260–Asp272. Residues Lys273 to Phe293 form a helical membrane-spanning segment. Over Arg294 to Gly324 the chain is Cytoplasmic.

This sequence belongs to the G-protein coupled receptor 1 family.

The protein localises to the cell membrane. Odorant receptor. The chain is Olfactory receptor 5A2 (OR5A2) from Homo sapiens (Human).